A 185-amino-acid chain; its full sequence is MTNAIIEKAKERFAHTHESLAREFGAIRAGRANASLLDRITVEYYGAPTPLNQLASITVPEARVLLISPFDKGSIADIERAINESDLGINPANDGSVIRLVIPALTEETRKELAKEVKKVGENAKIAIRNIRRDAMDEAKKQEKEKEITEDQLKTLEKDIQKATDDAVNKIDSMIAEKEKELLTV.

The protein belongs to the RRF family.

Its subcellular location is the cytoplasm. Responsible for the release of ribosomes from messenger RNA at the termination of protein biosynthesis. May increase the efficiency of translation by recycling ribosomes from one round of translation to another. The sequence is that of Ribosome-recycling factor from Streptococcus thermophilus (strain ATCC BAA-491 / LMD-9).